A 407-amino-acid polypeptide reads, in one-letter code: Zinc finger protein 174 (407 aa).

The segment at 1–20 is disordered; that stretch reads MAAKMEITLSSNTEASSKQE. Lysine 26 is covalently cross-linked (Glycyl lysine isopeptide (Lys-Gly) (interchain with G-Cter in SUMO2)). Residues 59 to 124 form the SCAN box domain; that stretch reads GPQEALSQLR…KEIVTLVEDF (66 aa). Residues 150–270 are disordered; that stretch reads GSQLGEQELP…RRQVSSPNAQ (121 aa). Residue lysine 204 forms a Glycyl lysine isopeptide (Lys-Gly) (interchain with G-Cter in SUMO2) linkage. Positions 211-221 are enriched in basic and acidic residues; that stretch reads PRMRSDNKENP. Glycyl lysine isopeptide (Lys-Gly) (interchain with G-Cter in SUMO2) cross-links involve residues lysine 230 and lysine 271. C2H2-type zinc fingers lie at residues 326–348, 354–376, and 382–405; these read YKCD…KRVH, YTCG…QRIH, and YQCG…RLHH.

Belongs to the krueppel C2H2-type zinc-finger protein family. Homodimer. In terms of tissue distribution, expressed in a variety of organs, but most strongly in adult testis and ovary followed by small intestine, colon, prostate, thymus, spleen, pancreas, skeletal muscle, heart, brain and kidney. Also expressed in umbilical vein endothelial cells, foreskin fibroblast and Hep-G2 cells.

The protein resides in the nucleus. Transcriptional repressor. The chain is Zinc finger protein 174 (ZNF174) from Homo sapiens (Human).